Here is a 208-residue protein sequence, read N- to C-terminus: Large ribosomal subunit protein bL25 (208 aa).

It belongs to the bacterial ribosomal protein bL25 family. CTC subfamily. In terms of assembly, part of the 50S ribosomal subunit; part of the 5S rRNA/L5/L18/L25 subcomplex. Contacts the 5S rRNA. Binds to the 5S rRNA independently of L5 and L18.

This is one of the proteins that binds to the 5S RNA in the ribosome where it forms part of the central protuberance. The polypeptide is Large ribosomal subunit protein bL25 (Phenylobacterium zucineum (strain HLK1)).